Consider the following 299-residue polypeptide: Taste receptor type 2 member 50 (299 aa).

A topological domain (extracellular) is located at residue M1. Residues 2–22 form a helical membrane-spanning segment; the sequence is ITFLYIFFSILIMVLFVLGNF. Residues 23–55 lie on the Cytoplasmic side of the membrane; that stretch reads ANGFIALVNFIDWVKRKKISSADQILTALAVSR. The chain crosses the membrane as a helical span at residues 56-76; it reads IGLLWTLLLNWYLTVLNPAFY. Topologically, residues 77–87 are extracellular; the sequence is SVELRITSYNA. A helical transmembrane segment spans residues 88–108; sequence WVVTNHFSMWLAASLSIFYLL. The Cytoplasmic segment spans residues 109-126; that stretch reads KIANFSNLIFLHLKRRVR. A helical membrane pass occupies residues 127 to 147; sequence SVILVILLGTLIFLVCHLLVA. Topologically, residues 148-181 are extracellular; it reads NMDESMWAEEYEGNITGKMKLRNTVHLSYLTVTT. An N-linked (GlcNAc...) asparagine glycan is attached at N161. Residues 182–202 form a helical membrane-spanning segment; sequence LWSFIPFTLSLISFLMLICSL. The Cytoplasmic portion of the chain corresponds to 203-229; that stretch reads CKHLKKMQLHGEGSQDLSTKVHIKALQ. A helical membrane pass occupies residues 230–250; that stretch reads TLISFLLLCAIFFLFLIISVW. Topologically, residues 251–259 are extracellular; sequence SPRRLRNDP. The helical transmembrane segment at 260–280 threads the bilayer; it reads VVMVSKAVGNIYLAFDSFILI. Residues 281-299 lie on the Cytoplasmic side of the membrane; that stretch reads WRTKKLKHTFLLILCQIRC.

This sequence belongs to the G-protein coupled receptor T2R family.

The protein resides in the membrane. In terms of biological role, receptor that may play a role in the perception of bitterness and is gustducin-linked. May play a role in sensing the chemical composition of the gastrointestinal content. The activity of this receptor may stimulate alpha gustducin, mediate PLC-beta-2 activation and lead to the gating of TRPM5. This Pan paniscus (Pygmy chimpanzee) protein is Taste receptor type 2 member 50 (TAS2R50).